The sequence spans 177 residues: Peptidyl-tRNA hydrolase (177 aa).

Tyrosine 14 is a tRNA binding site. The active-site Proton acceptor is histidine 19. TRNA is bound by residues phenylalanine 64, asparagine 66, and asparagine 112.

It belongs to the PTH family. As to quaternary structure, monomer.

Its subcellular location is the cytoplasm. The catalysed reaction is an N-acyl-L-alpha-aminoacyl-tRNA + H2O = an N-acyl-L-amino acid + a tRNA + H(+). Functionally, hydrolyzes ribosome-free peptidyl-tRNAs (with 1 or more amino acids incorporated), which drop off the ribosome during protein synthesis, or as a result of ribosome stalling. Catalyzes the release of premature peptidyl moieties from peptidyl-tRNA molecules trapped in stalled 50S ribosomal subunits, and thus maintains levels of free tRNAs and 50S ribosomes. In Latilactobacillus sakei (Lactobacillus sakei), this protein is Peptidyl-tRNA hydrolase.